The following is a 421-amino-acid chain: 26S proteasome non-ATPase regulatory subunit 11A (421 aa).

The PCI domain maps to 227–391 (AYSYFYEAFE…GVLIVFDEPP (165 aa)).

Belongs to the proteasome subunit S9 family. Component of the lid subcomplex of the 19S proteasome regulatory particle complex (also named PA700 complex). The 26S proteasome consists of a 20S proteasome core and two 19S regulatory subunits.

It is found in the nucleus. Its subcellular location is the cytoplasm. The protein resides in the cytosol. Component of the lid subcomplex of the 26S proteasome, a multiprotein complex involved in the ATP-dependent degradation of ubiquitinated proteins. In the complex, psmd11a is required for proteasome assembly. The sequence is that of 26S proteasome non-ATPase regulatory subunit 11A (psmd11a) from Danio rerio (Zebrafish).